The chain runs to 93 residues: MVWMKFLGVLLMSMGCFVIFRMNKHLLCLFVGLEMMSLGLLFVTHVFLMNQFWLILLILCLAVCEASICLALLVMVMRLCGDDLMSSLLSDGS.

Helical transmembrane passes span 1 to 21, 29 to 49, and 54 to 74; these read MVWMKFLGVLLMSMGCFVIFR, LFVGLEMMSLGLLFVTHVFLM, and LILLILCLAVCEASICLALLV.

The protein belongs to the complex I subunit 4L family.

The protein localises to the mitochondrion membrane. The enzyme catalyses a ubiquinone + NADH + 5 H(+)(in) = a ubiquinol + NAD(+) + 4 H(+)(out). Core subunit of the mitochondrial membrane respiratory chain NADH dehydrogenase (Complex I) that is believed to belong to the minimal assembly required for catalysis. Complex I functions in the transfer of electrons from NADH to the respiratory chain. The immediate electron acceptor for the enzyme is believed to be ubiquinone. The chain is NADH-ubiquinone oxidoreductase chain 4L (ND4L) from Mytilus edulis (Blue mussel).